The sequence spans 257 residues: UPF0246 protein Rsph17029_0026 (257 aa).

It belongs to the UPF0246 family.

This Cereibacter sphaeroides (strain ATCC 17029 / ATH 2.4.9) (Rhodobacter sphaeroides) protein is UPF0246 protein Rsph17029_0026.